The chain runs to 822 residues: Valine--tRNA ligase (822 aa).

The short motif at 41 to 51 is the 'HIGH' region element; it reads PNVTGQLHLGH. Positions 511 to 515 match the 'KMSKS' region motif; the sequence is KMSKS. Lys-514 lines the ATP pocket. Residues 765-822 adopt a coiled-coil conformation; that stretch reads EQKGRELKEIQFLKSEILRAEKILTNKGFLEKAPREKIDLERTKLEKLKEKLVFYEKK.

It belongs to the class-I aminoacyl-tRNA synthetase family. ValS type 1 subfamily. As to quaternary structure, monomer.

It localises to the cytoplasm. The enzyme catalyses tRNA(Val) + L-valine + ATP = L-valyl-tRNA(Val) + AMP + diphosphate. In terms of biological role, catalyzes the attachment of valine to tRNA(Val). As ValRS can inadvertently accommodate and process structurally similar amino acids such as threonine, to avoid such errors, it has a 'posttransfer' editing activity that hydrolyzes mischarged Thr-tRNA(Val) in a tRNA-dependent manner. The chain is Valine--tRNA ligase from Mesomycoplasma hyopneumoniae (strain J / ATCC 25934 / NCTC 10110) (Mycoplasma hyopneumoniae).